The following is an 84-amino-acid chain: ATP synthase subunit c (84 aa).

A run of 2 helical transmembrane segments spans residues 9–29 (IIAS…GFAI) and 54–74 (IVAG…LLFI).

The protein belongs to the ATPase C chain family. F-type ATPases have 2 components, F(1) - the catalytic core - and F(0) - the membrane proton channel. F(1) has five subunits: alpha(3), beta(3), gamma(1), delta(1), epsilon(1). F(0) has three main subunits: a(1), b(2) and c(10-14). The alpha and beta chains form an alternating ring which encloses part of the gamma chain. F(1) is attached to F(0) by a central stalk formed by the gamma and epsilon chains, while a peripheral stalk is formed by the delta and b chains.

It localises to the cell inner membrane. Functionally, f(1)F(0) ATP synthase produces ATP from ADP in the presence of a proton or sodium gradient. F-type ATPases consist of two structural domains, F(1) containing the extramembraneous catalytic core and F(0) containing the membrane proton channel, linked together by a central stalk and a peripheral stalk. During catalysis, ATP synthesis in the catalytic domain of F(1) is coupled via a rotary mechanism of the central stalk subunits to proton translocation. In terms of biological role, key component of the F(0) channel; it plays a direct role in translocation across the membrane. A homomeric c-ring of between 10-14 subunits forms the central stalk rotor element with the F(1) delta and epsilon subunits. This chain is ATP synthase subunit c, found in Pasteurella multocida (strain Pm70).